The primary structure comprises 96 residues: UPF0358 protein Aflv_1873 (96 aa).

It belongs to the UPF0358 family.

The sequence is that of UPF0358 protein Aflv_1873 from Anoxybacillus flavithermus (strain DSM 21510 / WK1).